Consider the following 261-residue polypeptide: uncharacterized protein (261 aa).

The signal sequence occupies residues 1–22 (MGYLKKVGMCISLLIVIIFVTS). The N-palmitoyl cysteine moiety is linked to residue cysteine 23. Cysteine 23 carries S-diacylglycerol cysteine lipidation.

This sequence belongs to the staphylococcal tandem lipoprotein family.

The protein localises to the cell membrane. This is an uncharacterized protein from Staphylococcus aureus (strain bovine RF122 / ET3-1).